We begin with the raw amino-acid sequence, 356 residues long: Peptide chain release factor 1 (356 aa).

Glutamine 233 carries the post-translational modification N5-methylglutamine.

Belongs to the prokaryotic/mitochondrial release factor family. Post-translationally, methylated by PrmC. Methylation increases the termination efficiency of RF1.

It localises to the cytoplasm. Functionally, peptide chain release factor 1 directs the termination of translation in response to the peptide chain termination codons UAG and UAA. This Oceanobacillus iheyensis (strain DSM 14371 / CIP 107618 / JCM 11309 / KCTC 3954 / HTE831) protein is Peptide chain release factor 1.